A 104-amino-acid polypeptide reads, in one-letter code: 10 kDa heat shock protein, mitochondrial (104 aa).

Residue Ser81 is modified to Phosphoserine.

This sequence belongs to the GroES chaperonin family. As to quaternary structure, homohexamer.

The protein resides in the mitochondrion matrix. Eukaryotic CPN10 homolog which is essential for mitochondrial protein biogenesis, together with CPN60. Binds to CPN60 in the presence of Mg-ATP and suppresses the ATPase activity of the latter. This Schizosaccharomyces pombe (strain 972 / ATCC 24843) (Fission yeast) protein is 10 kDa heat shock protein, mitochondrial (hsp10).